The chain runs to 389 residues: Ribosomal RNA large subunit methyltransferase M (389 aa).

Residues 1 to 13 (MIGNARMSQKYPT) are compositionally biased toward polar residues. Residues 1–24 (MIGNARMSQKYPTSSSRKRSPLSS) form a disordered region. S-adenosyl-L-methionine-binding positions include Ser-214, 247-250 (APGG), Asp-266, Asp-286, and Asp-302. Lys-331 functions as the Proton acceptor in the catalytic mechanism.

This sequence belongs to the class I-like SAM-binding methyltransferase superfamily. RNA methyltransferase RlmE family. RlmM subfamily. Monomer.

It is found in the cytoplasm. The catalysed reaction is cytidine(2498) in 23S rRNA + S-adenosyl-L-methionine = 2'-O-methylcytidine(2498) in 23S rRNA + S-adenosyl-L-homocysteine + H(+). Its function is as follows. Catalyzes the 2'-O-methylation at nucleotide C2498 in 23S rRNA. The polypeptide is Ribosomal RNA large subunit methyltransferase M (Hahella chejuensis (strain KCTC 2396)).